The chain runs to 653 residues: Fructose-1,6-bisphosphatase class 3 (653 aa).

The protein belongs to the FBPase class 3 family. Mn(2+) is required as a cofactor.

It carries out the reaction beta-D-fructose 1,6-bisphosphate + H2O = beta-D-fructose 6-phosphate + phosphate. It functions in the pathway carbohydrate biosynthesis; gluconeogenesis. This chain is Fructose-1,6-bisphosphatase class 3, found in Listeria innocua serovar 6a (strain ATCC BAA-680 / CLIP 11262).